The primary structure comprises 1077 residues: ATP-dependent DNA helicase MPH1 (1077 aa).

The Helicase ATP-binding domain maps to 99–266 (IVHRALFENV…EVVDNLQISK (168 aa)). 112–119 (IPTGMGKT) lines the ATP pocket. Positions 214–217 (DEAH) match the DEAH box motif. A Helicase C-terminal domain is found at 511 to 660 (KKVDRIRRLE…SLNYKVTDRI (150 aa)). Disordered stretches follow at residues 536–556 (EKLA…ISGM) and 831–859 (TLSS…PKRQ). Polar residues predominate over residues 831–841 (TLSSDNKSTPD).

The protein belongs to the DEAD box helicase family. DEAH subfamily. FANCM sub-subfamily. As to quaternary structure, interacts with the MHF histone-fold complex to form the FANCM-MHF complex.

Its subcellular location is the nucleus. It catalyses the reaction ATP + H2O = ADP + phosphate + H(+). Its function is as follows. ATP-dependent DNA helicase involved in DNA damage repair by homologous recombination and in genome maintenance. Capable of unwinding D-loops. Plays a role in limiting crossover recombinants during mitotic DNA double-strand break (DSB) repair. Component of a FANCM-MHF complex which promotes gene conversion at blocked replication forks, probably by reversal of the stalled fork. The sequence is that of ATP-dependent DNA helicase MPH1 from Eremothecium gossypii (strain ATCC 10895 / CBS 109.51 / FGSC 9923 / NRRL Y-1056) (Yeast).